The following is a 153-amino-acid chain: MKTFVLHIFIFALVAFASASRDSAKKIGSQYDNYETCLTEHGLTDDDVFSIGEVSSGQHKTNHEDTELHKNGCVLQCMLEKDGLMSGADYDEEKMREDYIKETGAQPGDQRIEALNACMHETTDMEDKCDKSLLLVACVLAAEAVLADSNEGA.

The first 19 residues, 1–19, serve as a signal peptide directing secretion; sequence MKTFVLHIFIFALVAFASA. Disulfide bonds link C37–C77, C73–C129, and C118–C138.

This sequence belongs to the PBP/GOBP family. In terms of assembly, homodimer.

The protein resides in the secreted. Functionally, colony queen number, a major feature of social organization, is associated with worker genotype for Gp-9. Colonies are headed by either a single reproductive queen (monogyne form) or multiple queens (polygyne form). Differences in worker Gp-9 genotypes between social forms may cause differences in workers' abilities to recognize queens and regulate their numbers. This chain is Pheromone-binding protein Gp-9, found in Solenopsis saevissima (Fire ant).